A 549-amino-acid chain; its full sequence is Cation/acetate symporter ActP (549 aa).

Transmembrane regions (helical) follow at residues W33–A53, L77–F97, G103–E123, I148–G168, I183–A203, W206–V226, I262–L282, G303–V323, L355–L375, V404–E424, I428–L448, G464–V484, and I493–F513.

It belongs to the sodium:solute symporter (SSF) (TC 2.A.21) family.

It localises to the cell inner membrane. In terms of biological role, transports acetate. This chain is Cation/acetate symporter ActP, found in Shigella boydii serotype 4 (strain Sb227).